The chain runs to 598 residues: Dihydroxy-acid dehydratase astD, mitochondrial (598 aa).

A mitochondrion-targeting transit peptide spans 1-111; sequence MFASRIRSRA…HRAGLVPMRF (111 aa). The segment at 23 to 50 is disordered; that stretch reads RLPASTTGRRYKSDETLNRVSSKITQPK. Positions 40 to 50 are enriched in polar residues; that stretch reads NRVSSKITQPK. C86 serves as a coordination point for [2Fe-2S] cluster. Mg(2+) is bound at residue D118. C159 contacts [2Fe-2S] cluster. D160 contacts Mg(2+). C232 is a binding site for [2Fe-2S] cluster. Position 485 (E485) interacts with Mg(2+). S511 acts as the Proton acceptor in catalysis.

It belongs to the IlvD/Edd family. [2Fe-2S] cluster serves as cofactor. Requires Mg(2+) as cofactor.

It is found in the mitochondrion. It catalyses the reaction (2R)-2,3-dihydroxy-3-methylbutanoate = 3-methyl-2-oxobutanoate + H2O. It carries out the reaction (2R,3R)-2,3-dihydroxy-3-methylpentanoate = (S)-3-methyl-2-oxopentanoate + H2O. The protein operates within amino-acid biosynthesis; L-isoleucine biosynthesis; L-isoleucine from 2-oxobutanoate: step 3/4. It participates in amino-acid biosynthesis; L-valine biosynthesis; L-valine from pyruvate: step 3/4. Its activity is regulated as follows. DHAD activity is not inhibited by the dihydroxyacid dehydratase inhibitor aspterric acid (AA). In terms of biological role, dihydroxyacid dehydratase; part of the gene cluster that mediates the biosynthesis of the sesquiterpenoid aspterric acid (AA), an inhibitor of dihydroxy-acid dehydratase (DHAD) effective as an herbicide. Performs the third step in the common pathway leading to biosynthesis of branched-chain amino acids. Catalyzes the dehydration of (2R,3R)-2,3-dihydroxy-3-methylpentanoate (2,3-dihydroxy-3-methylvalerate) into 2-oxo-3-methylpentanoate (2-oxo-3-methylvalerate) and of (2R)-2,3-dihydroxy-3-methylbutanoate (2,3-dihydroxyisovalerate) into 2-oxo-3-methylbutanoate (2-oxoisovalerate), the penultimate precursor to L-isoleucine and L-valine, respectively. AstD confers self-resistance in the presence of the dihydroxyacid dehydratase inhibitor aspterric acid (AA) produced by the ast cluster. This chain is Dihydroxy-acid dehydratase astD, mitochondrial, found in Aspergillus terreus (strain NIH 2624 / FGSC A1156).